We begin with the raw amino-acid sequence, 519 residues long: GMP synthase [glutamine-hydrolyzing] (519 aa).

In terms of domain architecture, Glutamine amidotransferase type-1 spans 4–201 (AILILDFGSQ…VHDICDAGYD (198 aa)). Catalysis depends on Cys-81, which acts as the Nucleophile. Residues His-175 and Glu-177 contribute to the active site. Residues 202–394 (WNMPDYVEEA…LGLPRDLVFR (193 aa)) enclose the GMPS ATP-PPase domain. Residue 229–235 (SGGVDSS) participates in ATP binding.

As to quaternary structure, homodimer.

It carries out the reaction XMP + L-glutamine + ATP + H2O = GMP + L-glutamate + AMP + diphosphate + 2 H(+). The protein operates within purine metabolism; GMP biosynthesis; GMP from XMP (L-Gln route): step 1/1. In terms of biological role, catalyzes the synthesis of GMP from XMP. The sequence is that of GMP synthase [glutamine-hydrolyzing] from Nitrosomonas eutropha (strain DSM 101675 / C91 / Nm57).